Reading from the N-terminus, the 183-residue chain is Adenine phosphoribosyltransferase (183 aa).

It belongs to the purine/pyrimidine phosphoribosyltransferase family. In terms of assembly, homodimer.

The protein localises to the cytoplasm. It catalyses the reaction AMP + diphosphate = 5-phospho-alpha-D-ribose 1-diphosphate + adenine. Its pathway is purine metabolism; AMP biosynthesis via salvage pathway; AMP from adenine: step 1/1. In terms of biological role, catalyzes a salvage reaction resulting in the formation of AMP, that is energically less costly than de novo synthesis. The sequence is that of Adenine phosphoribosyltransferase from Escherichia coli O157:H7.